A 149-amino-acid polypeptide reads, in one-letter code: Large ribosomal subunit protein bL9 (149 aa).

This sequence belongs to the bacterial ribosomal protein bL9 family.

In terms of biological role, binds to the 23S rRNA. This Tolumonas auensis (strain DSM 9187 / NBRC 110442 / TA 4) protein is Large ribosomal subunit protein bL9.